Reading from the N-terminus, the 390-residue chain is Succinate--CoA ligase [ADP-forming] subunit beta (390 aa).

The 237-residue stretch at 9–245 (KELLSRYGLP…KSQENEREVK (237 aa)) folds into the ATP-grasp domain. ATP contacts are provided by residues K46, 53–55 (GRG), E100, Y103, and E108. N200 and D214 together coordinate Mg(2+). Residues N265 and 322-324 (GIV) each bind substrate.

The protein belongs to the succinate/malate CoA ligase beta subunit family. In terms of assembly, heterotetramer of two alpha and two beta subunits. Mg(2+) serves as cofactor.

It carries out the reaction succinate + ATP + CoA = succinyl-CoA + ADP + phosphate. The catalysed reaction is GTP + succinate + CoA = succinyl-CoA + GDP + phosphate. Its pathway is carbohydrate metabolism; tricarboxylic acid cycle; succinate from succinyl-CoA (ligase route): step 1/1. Functionally, succinyl-CoA synthetase functions in the citric acid cycle (TCA), coupling the hydrolysis of succinyl-CoA to the synthesis of either ATP or GTP and thus represents the only step of substrate-level phosphorylation in the TCA. The beta subunit provides nucleotide specificity of the enzyme and binds the substrate succinate, while the binding sites for coenzyme A and phosphate are found in the alpha subunit. This chain is Succinate--CoA ligase [ADP-forming] subunit beta, found in Chromobacterium violaceum (strain ATCC 12472 / DSM 30191 / JCM 1249 / CCUG 213 / NBRC 12614 / NCIMB 9131 / NCTC 9757 / MK).